Consider the following 242-residue polypeptide: Phosphoribosylaminoimidazole-succinocarboxamide synthase (242 aa).

It belongs to the SAICAR synthetase family.

The catalysed reaction is 5-amino-1-(5-phospho-D-ribosyl)imidazole-4-carboxylate + L-aspartate + ATP = (2S)-2-[5-amino-1-(5-phospho-beta-D-ribosyl)imidazole-4-carboxamido]succinate + ADP + phosphate + 2 H(+). It participates in purine metabolism; IMP biosynthesis via de novo pathway; 5-amino-1-(5-phospho-D-ribosyl)imidazole-4-carboxamide from 5-amino-1-(5-phospho-D-ribosyl)imidazole-4-carboxylate: step 1/2. The sequence is that of Phosphoribosylaminoimidazole-succinocarboxamide synthase from Cyanothece sp. (strain PCC 7425 / ATCC 29141).